Here is a 500-residue protein sequence, read N- to C-terminus: Trehalose-6-phosphate synthase (500 aa).

Arg-28 is a binding site for D-glucose 6-phosphate. 48–49 contacts UDP-alpha-D-glucose; the sequence is GG. D-glucose 6-phosphate contacts are provided by Tyr-108 and Asp-162. The UDP-alpha-D-glucose site is built by Arg-304 and Lys-309. Position 342 (Arg-342) interacts with D-glucose 6-phosphate. Position 407-411 (407-411) interacts with UDP-alpha-D-glucose; sequence LVAKE.

This sequence belongs to the glycosyltransferase 20 family. Homotetramer.

The catalysed reaction is ADP-alpha-D-glucose + D-glucose 6-phosphate = alpha,alpha-trehalose 6-phosphate + ADP + H(+). It carries out the reaction CDP-alpha-D-glucose + D-glucose 6-phosphate = alpha,alpha-trehalose 6-phosphate + CDP + H(+). It catalyses the reaction GDP-alpha-D-glucose + D-glucose 6-phosphate = alpha,alpha-trehalose 6-phosphate + GDP + H(+). The enzyme catalyses TDP-alpha-D-glucose + D-glucose 6-phosphate = 5-methyl-UDP + alpha,alpha-trehalose 6-phosphate + H(+). The catalysed reaction is D-glucose 6-phosphate + UDP-alpha-D-glucose = alpha,alpha-trehalose 6-phosphate + UDP + H(+). It functions in the pathway glycan biosynthesis; trehalose biosynthesis. Functionally, probably involved in the osmoprotection via the biosynthesis of trehalose and in the production of glycogen and alpha-glucan via the TreS-Pep2 branch involved in the biosynthesis of maltose-1-phosphate (M1P). Catalyzes the transfer of glucose from UDP-glucose (UDP-Glc) to D-glucose 6-phosphate (Glc-6-P) to form trehalose-6-phosphate. Probably also able to use ADP-Glc, CDP-Glc, GDP-Glc and TDP-Glc as glucosyl donors. The chain is Trehalose-6-phosphate synthase from Mycobacterium bovis (strain ATCC BAA-935 / AF2122/97).